The following is a 263-amino-acid chain: Endonuclease 8 (263 aa).

The active-site Schiff-base intermediate with DNA is proline 2. Glutamate 3 serves as the catalytic Proton donor. Catalysis depends on lysine 53, which acts as the Proton donor; for beta-elimination activity. Positions 70, 125, and 169 each coordinate DNA. An FPG-type zinc finger spans residues 229 to 263 (KVFHRDGEPCERCGGIIEKTTLSSRPFYWCPGCQH). Arginine 253 serves as the catalytic Proton donor; for delta-elimination activity.

It belongs to the FPG family. The cofactor is Zn(2+).

It catalyses the reaction 2'-deoxyribonucleotide-(2'-deoxyribose 5'-phosphate)-2'-deoxyribonucleotide-DNA = a 3'-end 2'-deoxyribonucleotide-(2,3-dehydro-2,3-deoxyribose 5'-phosphate)-DNA + a 5'-end 5'-phospho-2'-deoxyribonucleoside-DNA + H(+). Involved in base excision repair of DNA damaged by oxidation or by mutagenic agents. Acts as a DNA glycosylase that recognizes and removes damaged bases. Has a preference for oxidized pyrimidines, such as thymine glycol, 5,6-dihydrouracil and 5,6-dihydrothymine. Has AP (apurinic/apyrimidinic) lyase activity and introduces nicks in the DNA strand. Cleaves the DNA backbone by beta-delta elimination to generate a single-strand break at the site of the removed base with both 3'- and 5'-phosphates. This chain is Endonuclease 8, found in Escherichia coli O6:K15:H31 (strain 536 / UPEC).